The following is a 668-amino-acid chain: tRNA 5-methylaminomethyl-2-thiouridine biosynthesis bifunctional protein MnmC (668 aa).

The tract at residues 1-245 is tRNA (mnm(5)s(2)U34)-methyltransferase; the sequence is MKHYSIQPAN…KREMLCGVME (245 aa). The tract at residues 270–668 is FAD-dependent cmnm(5)s(2)U34 oxidoreductase; the sequence is IGGGIASALL…LLKGKAVKAG (399 aa).

The protein in the N-terminal section; belongs to the methyltransferase superfamily. tRNA (mnm(5)s(2)U34)-methyltransferase family. This sequence in the C-terminal section; belongs to the DAO family. Requires FAD as cofactor.

It localises to the cytoplasm. The enzyme catalyses 5-aminomethyl-2-thiouridine(34) in tRNA + S-adenosyl-L-methionine = 5-methylaminomethyl-2-thiouridine(34) in tRNA + S-adenosyl-L-homocysteine + H(+). Its function is as follows. Catalyzes the last two steps in the biosynthesis of 5-methylaminomethyl-2-thiouridine (mnm(5)s(2)U) at the wobble position (U34) in tRNA. Catalyzes the FAD-dependent demodification of cmnm(5)s(2)U34 to nm(5)s(2)U34, followed by the transfer of a methyl group from S-adenosyl-L-methionine to nm(5)s(2)U34, to form mnm(5)s(2)U34. This chain is tRNA 5-methylaminomethyl-2-thiouridine biosynthesis bifunctional protein MnmC, found in Shigella dysenteriae serotype 1 (strain Sd197).